The sequence spans 212 residues: Protein DEPP1 (212 aa).

Disordered regions lie at residues 20 to 39 (EEML…SLDD), 49 to 79 (QPTS…GRPA), and 113 to 176 (QEKQ…SDLR). Over residues 113–124 (QEKQPSQRDLPR) the composition is skewed to basic and acidic residues.

In terms of tissue distribution, expressed in various tissues, including pancreas, placenta, ovary, testis and kidney.

It is found in the cytoplasm. Its subcellular location is the peroxisome. The protein resides in the mitochondrion. Functionally, acts as a critical modulator of FOXO3-induced autophagy via increased cellular ROS. This chain is Protein DEPP1, found in Homo sapiens (Human).